A 686-amino-acid polypeptide reads, in one-letter code: Potassium-transporting ATPase ATP-binding subunit (686 aa).

Transmembrane regions (helical) follow at residues 38 to 58 (VMFV…KDLV) and 64 to 84 (AAPL…VLFA). Residues 101–123 (ALRKMRKETTARRWKDGREERVP) are disordered. Positions 107-123 (KETTARRWKDGREERVP) are enriched in basic and acidic residues. The next 2 helical transmembrane spans lie at 224 to 244 (ILLV…VPLA) and 257 to 277 (VALL…AIGI). Catalysis depends on aspartate 308, which acts as the 4-aspartylphosphate intermediate. ATP is bound by residues aspartate 345, glutamate 349, 378–385 (FTAQTRMS), and lysine 399. The Mg(2+) site is built by aspartate 522 and aspartate 526. Transmembrane regions (helical) follow at residues 592–612 (FAIL…LNVM), 620–640 (AVLS…PLAL), and 666–686 (VIVP…VGLA).

It belongs to the cation transport ATPase (P-type) (TC 3.A.3) family. Type IA subfamily. As to quaternary structure, the system is composed of three essential subunits: KdpA, KdpB and KdpC.

It localises to the cell membrane. It carries out the reaction K(+)(out) + ATP + H2O = K(+)(in) + ADP + phosphate + H(+). Its function is as follows. Part of the high-affinity ATP-driven potassium transport (or Kdp) system, which catalyzes the hydrolysis of ATP coupled with the electrogenic transport of potassium into the cytoplasm. This subunit is responsible for energy coupling to the transport system and for the release of the potassium ions to the cytoplasm. This is Potassium-transporting ATPase ATP-binding subunit from Myxococcus xanthus.